Consider the following 1503-residue polypeptide: Transient receptor potential cation channel subfamily M member 2 (1503 aa).

Positions 1 to 20 (MEPSALRKAGSEQEEGFEGL) are disordered. Residues 1–752 (MEPSALRKAG…WWGQLSVDNG (752 aa)) lie on the Cytoplasmic side of the membrane. ADP-D-ribose contacts are provided by T174, N179, R302, G333, and T336. T740 carries the phosphothreonine modification. Residues 753–769 (LWRVTLCMLAFPLLLTG) lie within the membrane without spanning it. Residues 770–795 (LISFREKRLQDVGTPAARARAFFTAP) are Cytoplasmic-facing. The chain crosses the membrane as a helical span at residues 796 to 816 (VVVFHLNILSYFAFLCLFAYV). The Extracellular portion of the chain corresponds to 817 to 827 (LMVDFQPVPSW). A helical membrane pass occupies residues 828 to 848 (CECAIYLWLFSLVCEEMRQLF). The Ca(2+) site is built by E843 and Q846. At 849–867 (YDPDECGLMKKAALYFSDF) the chain is on the cytoplasmic side. A helical membrane pass occupies residues 868–888 (WNKLDVGAILLFVAGLTCRLI). N869 is a Ca(2+) binding site. Over 889–896 (PATLYPGR) the chain is Extracellular. The helical transmembrane segment at 897 to 917 (VILSLDFILFCLRLMHIFTIS) threads the bilayer. The Cytoplasmic segment spans residues 918 to 929 (KTLGPKIIIVKR). The chain crosses the membrane as a helical span at residues 930–950 (MMKDVFFFLFLLAVWVVSFGV). Residues 951–970 (AKQAILIHNERRVDWLFRGA) lie on the Extracellular side of the membrane. Residues 971–985 (VYHSYLTIFGQIPGY) constitute an intramembrane region (pore-forming). The short motif at 979 to 982 (FGQI) is the Selectivity filter element. Residues 986–1022 (IDGVNFNPEHCSPNGTDPYKPKCPESDATQQRPAFPE) lie on the Extracellular side of the membrane. Residues C996 and C1008 are joined by a disulfide bond. A helical membrane pass occupies residues 1023 to 1044 (WLTVLLLCLYLLFTNILLLNLL). The Cytoplasmic segment spans residues 1045–1079 (IAMFNYTFQQVQEHTDQIWKFQRHDLIEEYHGRPA). E1073 is a binding site for Ca(2+). The stretch at 1080 to 1098 (APPPFILLSHLQLFIKRVV) is an intramembrane region. Residues 1099–1503 (LKTPAKRHKQ…KAAAEFGAHY (405 aa)) are Cytoplasmic-facing. Residues 1206–1237 (EADVPTLASQKAAEEPDAEPGGRKKTEEPGDS) form a disordered region. In terms of domain architecture, Nudix hydrolase spans 1354–1498 (RWRRNEDGAI…KTLLQKAAAE (145 aa)). L1381 and S1382 together coordinate ADP-D-ribose. The Nudix box signature appears at 1390-1411 (GSREPGEMLPRKLKRILRQEHW). Positions 1431, 1433, 1485, and 1487 each coordinate ADP-D-ribose.

This sequence belongs to the transient receptor (TC 1.A.4) family. LTrpC subfamily. TRPM2 sub-subfamily. As to quaternary structure, homotetramer. Isoform 1 can interact with isoform 3. This interaction decreases Ca(2+) influx through isoform 1 and suppresses susceptibility to oxidative stress-induced cell death. Post-translationally, phosphorylation of TRPM2 at Thr-740 by protein kinase C (PKC) counteracts the effect of cytosolic Ca(2+) and elevates the temperature threshold. In terms of tissue distribution, highly expressed in brain and peripheral blood cells, such as neutrophils. Also detected in bone marrow, spleen, heart, liver and lung. Isoform 2 is found in neutrophil granulocytes.

The protein localises to the cell membrane. Its subcellular location is the perikaryon. It is found in the cell projection. The protein resides in the cytoplasmic vesicle. It localises to the lysosome. It catalyses the reaction Ca(2+)(in) = Ca(2+)(out). The catalysed reaction is Na(+)(in) = Na(+)(out). With respect to regulation, activated by intracellular ADP-ribose, beta-NAD (NAD(+)) and similar compounds, and by oxidative stress caused by reactive oxygen or nitrogen species. Ca(2+) and PI(4,5)P2 are required for channel opening by ADP-ribose. Activation by ADP-ribose and beta-NAD is strongly increased by moderate heat (35 to 40 degrees Celsius). Likewise, reactive oxygen species lower the threshold for activation by moderate heat (37 degrees Celsius). Activated by moderate heat (35 to 40 degrees Celsius). Inactivated by exposure to extracellular pH between 4.0 and 6.5; irreversibly inactivated when open channels are exposed to extracellular pH between 4.0 and 6.5, while pre-exposure of closed channels to extracellular pH 5.5 gives rise to currents that rapidly inactivate, but protects against irreversible inactivation. Inactivated by intracellular ATP. Activated by arachidonic acid. Inhibited by 2-aminoethyl diphenylborinate (2-APB). In terms of biological role, nonselective, voltage-independent cation channel that mediates Na(+) and Ca(2+) influx, leading to increased cytoplasmic Ca(2+) levels. Functions as a ligand-gated ion channel, gated by intracellular adenosine diphosphate ribose (ADP-ribose), Ca(2+), warm temperature, and oxidative stress. The precise physiological activators are under debate; the true, physiological activators may be ADP-ribose and ADP-ribose-2'-phosphate. Binding of ADP-ribose to the cytoplasmic Nudix domain causes a conformation change; the channel is primed but still requires Ca(2+) binding to trigger channel opening. Extracellular Ca(2+) passes through the channel and increases channel activity. Contributes to Ca(2+) release from intracellular stores in response to ADP-ribose. Plays a role in numerous processes that involve signaling via intracellular Ca(2+) levels. Besides, mediates the release of lysosomal Zn(2+) stores in response to reactive oxygen species, leading to increased cytosolic Zn(2+) levels. Plays a role in mediating behavorial and physiological responses to moderate heat and thereby contributes to body temperature homeostasis. Plays a role in insulin secretion, a process that requires increased cytoplasmic Ca(2+) levels. Required for normal IFNG and cytokine secretion and normal innate immune immunity in response to bacterial infection. Required for normal phagocytosis and cytokine release by macrophages exposed to zymosan (in vitro). Plays a role in dendritic cell differentiation and maturation, and in dendritic cell chemotaxis via its role in regulating cytoplasmic Ca(2+) levels. Plays a role in the regulation of the reorganization of the actin cytoskeleton and filopodia formation in response to reactive oxygen species via its role in increasing cytoplasmic Ca(2+) and Zn(2+) levels. Confers susceptibility to cell death following oxidative stress. Lacks cation channel activity. Does not mediate cation transport in response to oxidative stress or ADP-ribose. Functionally, lacks cation channel activity and negatively regulates the channel activity of isoform 1. Negatively regulates susceptibility to cell death in reposponse to oxidative stress. This is Transient receptor potential cation channel subfamily M member 2 (TRPM2) from Homo sapiens (Human).